The sequence spans 95 residues: MSLSAAEVNKIAWLARLAIDDDKVEAYARDLSQILGFVEQLGSVDTSRVAPMAHPLDEAQRLRPDDVTETDQRALFQAHAPLVEAGLYLVPKVIE.

Belongs to the GatC family. In terms of assembly, heterotrimer of A, B and C subunits.

It catalyses the reaction L-glutamyl-tRNA(Gln) + L-glutamine + ATP + H2O = L-glutaminyl-tRNA(Gln) + L-glutamate + ADP + phosphate + H(+). The catalysed reaction is L-aspartyl-tRNA(Asn) + L-glutamine + ATP + H2O = L-asparaginyl-tRNA(Asn) + L-glutamate + ADP + phosphate + 2 H(+). Allows the formation of correctly charged Asn-tRNA(Asn) or Gln-tRNA(Gln) through the transamidation of misacylated Asp-tRNA(Asn) or Glu-tRNA(Gln) in organisms which lack either or both of asparaginyl-tRNA or glutaminyl-tRNA synthetases. The reaction takes place in the presence of glutamine and ATP through an activated phospho-Asp-tRNA(Asn) or phospho-Glu-tRNA(Gln). The chain is Aspartyl/glutamyl-tRNA(Asn/Gln) amidotransferase subunit C from Methylococcus capsulatus (strain ATCC 33009 / NCIMB 11132 / Bath).